The sequence spans 264 residues: MIEAVNICVQRGKKQILNHIDFQAKSSALTVIIGPNGSGKSTFVKALSGEIPYSGKMTLNGHDVTHTKTYEMAAMRAVLPQFTTLAFPFLVHEVVALGLSVNQFTIAKKQLQNLPQKALECVGLADYGNRHYHQLSGGEQARVQLARVLCQIWEPVCNKVPRWMILDEPIANLDIQHQLVVMNIARNFARCGGGVLAVLHDLNLAAHYADKMILLKQGKIYCEGSASTVLTTQNLSDAYHCSLPVSELPKADTPFVLPQTASFL.

Residues 2-242 (IEAVNICVQR…QNLSDAYHCS (241 aa)) form the ABC transporter domain. 34–41 (GPNGSGKS) is a binding site for ATP.

This sequence belongs to the ABC transporter superfamily. Heme (hemin) importer (TC 3.A.1.14.5) family. As to quaternary structure, the complex is composed of two ATP-binding proteins (HmuV), two transmembrane proteins (HmuU) and a solute-binding protein (HmuT).

It is found in the cell inner membrane. Functionally, part of the ABC transporter complex HmuTUV involved in hemin import. Responsible for energy coupling to the transport system. The sequence is that of Hemin import ATP-binding protein HmuV from Bartonella quintana (strain Toulouse) (Rochalimaea quintana).